Consider the following 511-residue polypeptide: Chromosomal replication initiator protein DnaA (511 aa).

The segment at 1 to 87 (MSVELWQQCV…IGSKRSSAPR (87 aa)) is domain I, interacts with DnaA modulators. A domain II region spans residues 87 to 174 (RAAPNAPLAA…QVEGALKHTS (88 aa)). The interval 133–160 (VATHDEPSRDSFDPMAGASSQQAPARAE) is disordered. A compositionally biased stretch (basic and acidic residues) spans 134–144 (ATHDEPSRDSF). The interval 175-391 (YLNRTFTFEN…GALKRVIAHS (217 aa)) is domain III, AAA+ region. Positions 219, 221, 222, and 223 each coordinate ATP. The tract at residues 392 to 511 (HFMGRDITIE…YKNLLRTLTT (120 aa)) is domain IV, binds dsDNA.

Belongs to the DnaA family. As to quaternary structure, oligomerizes as a right-handed, spiral filament on DNA at oriC.

It is found in the cytoplasm. Plays an essential role in the initiation and regulation of chromosomal replication. ATP-DnaA binds to the origin of replication (oriC) to initiate formation of the DNA replication initiation complex once per cell cycle. Binds the DnaA box (a 9 base pair repeat at the origin) and separates the double-stranded (ds)DNA. Forms a right-handed helical filament on oriC DNA; dsDNA binds to the exterior of the filament while single-stranded (ss)DNA is stabiized in the filament's interior. The ATP-DnaA-oriC complex binds and stabilizes one strand of the AT-rich DNA unwinding element (DUE), permitting loading of DNA polymerase. After initiation quickly degrades to an ADP-DnaA complex that is not apt for DNA replication. Binds acidic phospholipids. The polypeptide is Chromosomal replication initiator protein DnaA (Pseudomonas syringae pv. tomato (strain ATCC BAA-871 / DC3000)).